Reading from the N-terminus, the 1400-residue chain is DNA topoisomerase 2 (1400 aa).

Residues 1-30 show a composition bias toward low complexity; sequence MSSFESDSASDAESAFSDASSDFTPSSSVK. Residues 1 to 57 form a disordered region; the sequence is MSSFESDSASDAESAFSDASSDFTPSSSVKSKGKVPLRDSTNTTAQPSAPATGDASD. Positions 39–57 are enriched in polar residues; the sequence is DSTNTTAQPSAPATGDASD. Residues N117, N146, 174–176, and 187–194 contribute to the ATP site; these read SSN and GRNGYGAK. The tract at residues 379–386 is interaction with DNA; it reads TKKEKGKK. 415–417 provides a ligand contact to ATP; the sequence is QTK. The 117-residue stretch at 497–613 folds into the Toprim domain; the sequence is CTLILTEGDS…GLLEIPGFLL (117 aa). Mg(2+) contacts are provided by E503, D582, and D584. Residues 749–1214 enclose the Topo IIA-type catalytic domain; that stretch reads IPSILDGFKP…SAKDLWNSDL (466 aa). Y839 acts as the O-(5'-phospho-DNA)-tyrosine intermediate in catalysis. The segment at 1019-1028 is interaction with DNA; sequence KLISSISLSN. Positions 1235 to 1400 are disordered; it reads FGPTAKTSTR…NESDEDYMSE (166 aa). Residues 1262–1271 are compositionally biased toward low complexity; it reads SSTPKASTPT. Basic residues predominate over residues 1312-1321; it reads PKRKTPKSKP. Residues 1389-1400 show a composition bias toward acidic residues; sequence DGNESDEDYMSE.

The protein belongs to the type II topoisomerase family. Homodimer. Requires Mg(2+) as cofactor. The cofactor is Mn(2+). Ca(2+) is required as a cofactor.

Its subcellular location is the nucleus. It carries out the reaction ATP-dependent breakage, passage and rejoining of double-stranded DNA.. Functionally, control of topological states of DNA by transient breakage and subsequent rejoining of DNA strands. Topoisomerase II makes double-strand breaks. In Meyerozyma guilliermondii (strain ATCC 6260 / CBS 566 / DSM 6381 / JCM 1539 / NBRC 10279 / NRRL Y-324) (Yeast), this protein is DNA topoisomerase 2 (TOP2).